Reading from the N-terminus, the 610-residue chain is Zinc finger protein 823 (610 aa).

The region spanning 4–97 (VAFEDVAVNF…VNKNTPRVNP (94 aa)) is the KRAB domain. 10 consecutive C2H2-type zinc fingers follow at residues 164-186 (FDCK…MAAH), 192-214 (YKCK…ERTH), 220-242 (YECK…ERIH), 248-270 (YECK…ERTH), 276-298 (YKCT…ERTH), 304-326 (YACK…MIRH), 332-354 (HKCK…ETTH), 360-382 (YECK…MITH), 388-410 (QKCK…ERTH), and 416-438 (YQCK…EATH). The segment at 444–465 (YKCQCGKAFSDLSSFQNHETTH) adopts a C2H2-type 11; atypical zinc-finger fold. 5 C2H2-type zinc fingers span residues 471–493 (YECK…KRTH), 499–521 (YECK…ERIH), 527–549 (YECK…ERIH), 555–577 (YECL…EKTH), and 583–605 (YECK…KRTH).

This sequence belongs to the krueppel C2H2-type zinc-finger protein family.

The protein localises to the nucleus. In terms of biological role, may be involved in transcriptional regulation. The protein is Zinc finger protein 823 (ZNF823) of Homo sapiens (Human).